We begin with the raw amino-acid sequence, 471 residues long: Trigger factor (471 aa).

The region spanning 169–264 (GDVAVVDFKG…LKEIKEKELP (96 aa)) is the PPIase FKBP-type domain.

Belongs to the FKBP-type PPIase family. Tig subfamily.

Its subcellular location is the cytoplasm. It carries out the reaction [protein]-peptidylproline (omega=180) = [protein]-peptidylproline (omega=0). Its function is as follows. Involved in protein export. Acts as a chaperone by maintaining the newly synthesized protein in an open conformation. Functions as a peptidyl-prolyl cis-trans isomerase. This is Trigger factor from Nostoc sp. (strain PCC 7120 / SAG 25.82 / UTEX 2576).